Reading from the N-terminus, the 334-residue chain is GTPase Obg (334 aa).

Positions 4–162 (FDFIDEVKKY…GWIKLELKLL (159 aa)) constitute an Obg domain. In terms of domain architecture, OBG-type G spans 163–330 (AEVGLVGFPN…FKDKIWKLLH (168 aa)). GTP is bound by residues 169-176 (GFPNAGKS), 194-198 (FTTLV), 216-219 (DMPG), 284-287 (SKLD), and 311-313 (SSV). Mg(2+) is bound by residues Ser-176 and Thr-196.

Belongs to the TRAFAC class OBG-HflX-like GTPase superfamily. OBG GTPase family. Monomer. Requires Mg(2+) as cofactor.

It localises to the cytoplasm. Its function is as follows. An essential GTPase which binds GTP, GDP and possibly (p)ppGpp with moderate affinity, with high nucleotide exchange rates and a fairly low GTP hydrolysis rate. Plays a role in control of the cell cycle, stress response, ribosome biogenesis and in those bacteria that undergo differentiation, in morphogenesis control. The chain is GTPase Obg from Amoebophilus asiaticus (strain 5a2).